Consider the following 385-residue polypeptide: Methionyl-tRNA formyltransferase, mitochondrial (385 aa).

Belongs to the Fmt family.

The protein resides in the mitochondrion. It catalyses the reaction L-methionyl-tRNA(fMet) + (6R)-10-formyltetrahydrofolate = N-formyl-L-methionyl-tRNA(fMet) + (6S)-5,6,7,8-tetrahydrofolate + H(+). Methionyl-tRNA formyltransferase that formylates methionyl-tRNA in mitochondria and is crucial for translation initiation. The chain is Methionyl-tRNA formyltransferase, mitochondrial (Mtfmt) from Rattus norvegicus (Rat).